The primary structure comprises 589 residues: Proline--tRNA ligase (589 aa).

It belongs to the class-II aminoacyl-tRNA synthetase family. ProS type 1 subfamily. Homodimer.

The protein localises to the cytoplasm. It catalyses the reaction tRNA(Pro) + L-proline + ATP = L-prolyl-tRNA(Pro) + AMP + diphosphate. Functionally, catalyzes the attachment of proline to tRNA(Pro) in a two-step reaction: proline is first activated by ATP to form Pro-AMP and then transferred to the acceptor end of tRNA(Pro). As ProRS can inadvertently accommodate and process non-cognate amino acids such as alanine and cysteine, to avoid such errors it has two additional distinct editing activities against alanine. One activity is designated as 'pretransfer' editing and involves the tRNA(Pro)-independent hydrolysis of activated Ala-AMP. The other activity is designated 'posttransfer' editing and involves deacylation of mischarged Ala-tRNA(Pro). The misacylated Cys-tRNA(Pro) is not edited by ProRS. This chain is Proline--tRNA ligase, found in Nocardioides sp. (strain ATCC BAA-499 / JS614).